The sequence spans 1024 residues: MSTIVFGSFTCHLDAAIHQDNADRLAKAWTRPENRQVSNVHLLCRRAAKSLINTYESATASAWKGLEEKLQPMFAKREFSKTVTKRKGLRCFKESSEKFIEKKLRKQYQEERERFQFVNGPDAIVNQISVDKCEASVWVPFPHIIEKPSFATPSMKKKVVFTKVRMSEASLQLFMRRVAANAKANGQKVEIIGRKRVVGNYTTKSRLTYFRTHVRHLDGSKPRYDLVLDEATKKILQLFANTSRFHHVHKKGEVTPGMSGFVVNPINLSDPMQVYDTDLFIVRGKHNSILVDSRCKVSKKQSNEIIHYSDPGKQFSDGFTNSFMQCKLRETDHQSTSDLDVKECGDVAALVCQAIIPCGKITCLQCAQKYSYMSQQEIRDRFSTVIEQHEKTAMDNYPQFSHVLAFLKRYRELMRVENQNYEAFKDITHMIGEDRKEAPFSHLQQINELIIKGGMMSAQDYIEASDHLRELARYQKNRTENIRSGSIKAFRNKISSKAHVNMQLMCDNQLDTNGNFVWGQREYHAKRFFRNYFDVIDVSEGYRRHIVRENPRGIRKLAIGNLVISTNLAALRKQLLGEECIHFEVSKECTSRRGENFVYQCCCVTHEDGTPLESEIISPTKNHLVVGNTGDSKYVDLPTAKGGAMFIAKAGYCYINIFLAMLININEDEAKSFTKTVRDTLVPKLGTWPSMMDLATACHFLAVLYPETRNAELPRILVDHEAKIFHVVDSFGSLSTGMHVLKANTINQLISFASDTLDSNMKTYLVGGSEVDKCDEFKNVKLLIRSIYKPQIMEQVLKEEPYLLLMSVLSPGVLMALFNSGSLEKATQYWITRSHTLAAITSMLSALAAKVSLASTLNAQMSVIDEHAAVLCDSVFDGTKPYASYMMAVKTLERMKARTESDHTLNDLGFSVLRQATPHLVEKKLSPGIGASLERVKLVGKILCNLGIAAVAKTYTKTFHPKRRRRFRRQVRHLRSVITWQPVQTPERRSPTEKRRCGLLYTPVDGEAILQSHRNFHKFSSKHS.

In terms of domain architecture, Peptidase S30 spans 165 to 308; it reads RMSEASLQLF…KKQSNEIIHY (144 aa). Active-site for P1 proteinase activity residues include His-216, Asp-225, and Ser-259. The Involved in interaction with stylet and aphid transmission signature appears at 360–363; the sequence is KITC. The Involved in virions binding and aphid transmission signature appears at 619-621; sequence PTK. The Peptidase C6 domain occupies 645 to 767; sequence MFIAKAGYCY…DSNMKTYLVG (123 aa). Catalysis depends on for helper component proteinase activity residues Cys-653 and His-726.

It belongs to the potyviridae P3N-PIPO polyprotein family. In terms of assembly, interacts (via PIPO domain) with host PCaP1 protein; this interaction may help to anchor the movement complex to the plasma membrane from which the complex could move to the plasmodesmata. Post-translationally, potyviral RNA is expressed as two polyproteins which undergo post-translational proteolytic processing. Genome polyprotein is processed by NIa-pro, P1 and HC-pro proteinases resulting in the production of at least ten individual proteins. P3N-PIPO is cleaved by P1 and HC-pro proteinases resulting in the production of three individual proteins. The P1 proteinase and the HC-pro cleave only their respective C-termini autocatalytically.

It localises to the host cell junction. Its subcellular location is the host plasmodesma. The catalysed reaction is Hydrolyzes a Gly-|-Gly bond at its own C-terminus, commonly in the sequence -Tyr-Xaa-Val-Gly-|-Gly, in the processing of the potyviral polyprotein.. Its function is as follows. Required for aphid transmission and also has proteolytic activity. Only cleaves a Gly-Gly dipeptide at its own C-terminus. Interacts with virions and aphid stylets. Acts as a suppressor of RNA-mediated gene silencing, also known as post-transcriptional gene silencing (PTGS), a mechanism of plant viral defense that limits the accumulation of viral RNAs. May have RNA-binding activity. Allows efficient cell to cell propagation, by bypassing the host cell wall barrier. Transports viral genome to neighboring plant cells directly through plasmosdesmata, without any budding. This chain is P3N-PIPO polyprotein, found in Plum pox potyvirus (strain D) (PPV).